We begin with the raw amino-acid sequence, 100 residues long: MAKKSLIQREKKRQKLEQKYHLIRRSSKKEISKVRSLSDKWEIYGKLQSPPRNSAPTRLHRRCFSTGRPRANYRDFGLSGHILREMVHACLLPGATRSSW.

This sequence belongs to the universal ribosomal protein uS14 family. As to quaternary structure, part of the 30S ribosomal subunit.

The protein resides in the plastid. It localises to the chloroplast. Functionally, binds 16S rRNA, required for the assembly of 30S particles. The protein is Small ribosomal subunit protein uS14c of Lactuca sativa (Garden lettuce).